Consider the following 218-residue polypeptide: Thiamine-phosphate synthase (218 aa).

Residues 46 to 50 and D83 each bind 4-amino-2-methyl-5-(diphosphooxymethyl)pyrimidine; that span reads QFRDK. D84 and D103 together coordinate Mg(2+). S122 provides a ligand contact to 4-amino-2-methyl-5-(diphosphooxymethyl)pyrimidine. Residue 149 to 151 coordinates 2-[(2R,5Z)-2-carboxy-4-methylthiazol-5(2H)-ylidene]ethyl phosphate; the sequence is TNS. K152 contributes to the 4-amino-2-methyl-5-(diphosphooxymethyl)pyrimidine binding site. Residues G181 and 201–202 each bind 2-[(2R,5Z)-2-carboxy-4-methylthiazol-5(2H)-ylidene]ethyl phosphate; that span reads IT.

It belongs to the thiamine-phosphate synthase family. Mg(2+) is required as a cofactor.

It catalyses the reaction 2-[(2R,5Z)-2-carboxy-4-methylthiazol-5(2H)-ylidene]ethyl phosphate + 4-amino-2-methyl-5-(diphosphooxymethyl)pyrimidine + 2 H(+) = thiamine phosphate + CO2 + diphosphate. The enzyme catalyses 2-(2-carboxy-4-methylthiazol-5-yl)ethyl phosphate + 4-amino-2-methyl-5-(diphosphooxymethyl)pyrimidine + 2 H(+) = thiamine phosphate + CO2 + diphosphate. It carries out the reaction 4-methyl-5-(2-phosphooxyethyl)-thiazole + 4-amino-2-methyl-5-(diphosphooxymethyl)pyrimidine + H(+) = thiamine phosphate + diphosphate. It participates in cofactor biosynthesis; thiamine diphosphate biosynthesis; thiamine phosphate from 4-amino-2-methyl-5-diphosphomethylpyrimidine and 4-methyl-5-(2-phosphoethyl)-thiazole: step 1/1. Condenses 4-methyl-5-(beta-hydroxyethyl)thiazole monophosphate (THZ-P) and 2-methyl-4-amino-5-hydroxymethyl pyrimidine pyrophosphate (HMP-PP) to form thiamine monophosphate (TMP). This chain is Thiamine-phosphate synthase, found in Actinobacillus pleuropneumoniae serotype 7 (strain AP76).